Reading from the N-terminus, the 498-residue chain is ATP synthase subunit beta, chloroplastic (498 aa).

172–179 (GGAGVGKT) lines the ATP pocket.

This sequence belongs to the ATPase alpha/beta chains family. F-type ATPases have 2 components, CF(1) - the catalytic core - and CF(0) - the membrane proton channel. CF(1) has five subunits: alpha(3), beta(3), gamma(1), delta(1), epsilon(1). CF(0) has four main subunits: a(1), b(1), b'(1) and c(9-12).

The protein resides in the plastid. It is found in the chloroplast thylakoid membrane. The catalysed reaction is ATP + H2O + 4 H(+)(in) = ADP + phosphate + 5 H(+)(out). Functionally, produces ATP from ADP in the presence of a proton gradient across the membrane. The catalytic sites are hosted primarily by the beta subunits. In Magnolia tripetala (Umbrella-tree), this protein is ATP synthase subunit beta, chloroplastic.